Here is a 483-residue protein sequence, read N- to C-terminus: Endoplasmic reticulum lectin 1 (483 aa).

Residues 1 to 33 (MEEGDGGLRSLVPGGPLLLVLYGLLEASGGGRA) form the signal peptide. 2 consecutive MRH domains span residues 111–246 (SSCS…LCSH) and 342–469 (SYCF…ICKI). C113 and C126 are oxidised to a cystine. N195 is a glycosylation site (N-linked (GlcNAc...) asparagine). Intrachain disulfides connect C199-C232, C215-C244, C344-C357, C421-C455, and C436-C467.

In terms of assembly, may form a complex with OS9, HSPA5, SYVN1, and SEL1L with which it interacts directly. Interacts (via PRKCSH 2 domain) with KREMEN2 (when glycosylated). Interacts with HSPA5. N-glycosylated.

The protein resides in the endoplasmic reticulum lumen. Its function is as follows. Probable lectin that binds selectively to improperly folded lumenal proteins. May function in endoplasmic reticulum quality control and endoplasmic reticulum-associated degradation (ERAD) of both non-glycosylated proteins and glycoproteins. The polypeptide is Endoplasmic reticulum lectin 1 (Erlec1) (Mus musculus (Mouse)).